A 59-amino-acid chain; its full sequence is MDHRLLEIVACPVCKGKLTFDKDKQELVCKIDRLAYPIKEGIPVLLEPEARTVSMDEGK.

It belongs to the UPF0434 family.

The protein is UPF0434 protein VS_2060 of Vibrio atlanticus (strain LGP32) (Vibrio splendidus (strain Mel32)).